The sequence spans 379 residues: Chaperone protein DnaJ (379 aa).

The 66-residue stretch at 5-70 (DYYEVLGVEK…QKRAAYDQYG (66 aa)) folds into the J domain. The CR-type zinc finger occupies 133-211 (GKSVEIRVPT…CHGQGRVEKT (79 aa)). 8 residues coordinate Zn(2+): C146, C149, C163, C166, C185, C188, C199, and C202. CXXCXGXG motif repeat units follow at residues 146 to 153 (CDTCDGSG), 163 to 170 (CTTCHGQG), 185 to 192 (CPTCGGKG), and 199 to 206 (CDVCHGQG).

Belongs to the DnaJ family. Homodimer. Zn(2+) serves as cofactor.

Its subcellular location is the cytoplasm. Participates actively in the response to hyperosmotic and heat shock by preventing the aggregation of stress-denatured proteins and by disaggregating proteins, also in an autonomous, DnaK-independent fashion. Unfolded proteins bind initially to DnaJ; upon interaction with the DnaJ-bound protein, DnaK hydrolyzes its bound ATP, resulting in the formation of a stable complex. GrpE releases ADP from DnaK; ATP binding to DnaK triggers the release of the substrate protein, thus completing the reaction cycle. Several rounds of ATP-dependent interactions between DnaJ, DnaK and GrpE are required for fully efficient folding. Also involved, together with DnaK and GrpE, in the DNA replication of plasmids through activation of initiation proteins. This Pseudoalteromonas atlantica (strain T6c / ATCC BAA-1087) protein is Chaperone protein DnaJ.